A 238-amino-acid polypeptide reads, in one-letter code: RNA pyrophosphohydrolase (238 aa).

The 144-residue stretch at 6–149 folds into the Nudix hydrolase domain; that stretch reads GFRPNVGIIL…KREVYQMALS (144 aa). A Nudix box motif is present at residues 38–59; the sequence is GGIKYGETPEQAMYRELHEEVG. The segment at 161–238 is disordered; sequence APLSPYGRGG…PDDTPSKDSL (78 aa). Over residues 171 to 181 the composition is skewed to basic and acidic residues; it reads PHRERDGRDNR. Residues 188 to 199 are compositionally biased toward polar residues; that stretch reads RNDQNTRGQRQP. A compositionally biased stretch (low complexity) spans 204-217; sequence VTTSTVIVETVITS.

This sequence belongs to the Nudix hydrolase family. RppH subfamily. A divalent metal cation is required as a cofactor.

Functionally, accelerates the degradation of transcripts by removing pyrophosphate from the 5'-end of triphosphorylated RNA, leading to a more labile monophosphorylated state that can stimulate subsequent ribonuclease cleavage. This chain is RNA pyrophosphohydrolase, found in Ralstonia nicotianae (strain ATCC BAA-1114 / GMI1000) (Ralstonia solanacearum).